The primary structure comprises 35 residues: Potassium channel toxin alpha-KTx 23.2 (35 aa).

Intrachain disulfides connect cysteine 6–cysteine 26, cysteine 12–cysteine 31, and cysteine 16–cysteine 33.

This sequence belongs to the short scorpion toxin superfamily. Potassium channel inhibitor family. Alpha-KTx 23 subfamily. In terms of tissue distribution, expressed by the venom gland.

It is found in the secreted. In terms of biological role, selectively and irreversibly binds (K(d)=2.9 pM) and blocks Kv1.3/KCNA3 potassium channels of human T-lymphocytes. Weakly blocks Kv1.2/KCNA2 (9%). This Vaejovis mexicanus smithi (Mexican scorpion) protein is Potassium channel toxin alpha-KTx 23.2.